A 528-amino-acid polypeptide reads, in one-letter code: Phosphoenolpyruvate carboxykinase (ATP) (528 aa).

Substrate is bound by residues Arg56, Tyr192, and Lys198. ATP-binding positions include Lys198, His217, and Gly233–Thr241. Mn(2+)-binding residues include Lys198 and His217. Asp254 contacts Mn(2+). Residues Glu282, Arg319, and Thr444 each coordinate ATP. Substrate is bound at residue Arg319.

The protein belongs to the phosphoenolpyruvate carboxykinase (ATP) family. Mn(2+) is required as a cofactor.

The protein resides in the cytoplasm. It carries out the reaction oxaloacetate + ATP = phosphoenolpyruvate + ADP + CO2. Its pathway is carbohydrate biosynthesis; gluconeogenesis. Functionally, involved in the gluconeogenesis. Catalyzes the conversion of oxaloacetate (OAA) to phosphoenolpyruvate (PEP) through direct phosphoryl transfer between the nucleoside triphosphate and OAA. This chain is Phosphoenolpyruvate carboxykinase (ATP), found in Bacillus anthracis (strain A0248).